Here is a 368-residue protein sequence, read N- to C-terminus: 4-hydroxy-3-methylbut-2-en-1-yl diphosphate synthase (flavodoxin) (368 aa).

[4Fe-4S] cluster contacts are provided by cysteine 271, cysteine 274, cysteine 306, and glutamate 313.

It belongs to the IspG family. It depends on [4Fe-4S] cluster as a cofactor.

The enzyme catalyses (2E)-4-hydroxy-3-methylbut-2-enyl diphosphate + oxidized [flavodoxin] + H2O + 2 H(+) = 2-C-methyl-D-erythritol 2,4-cyclic diphosphate + reduced [flavodoxin]. It participates in isoprenoid biosynthesis; isopentenyl diphosphate biosynthesis via DXP pathway; isopentenyl diphosphate from 1-deoxy-D-xylulose 5-phosphate: step 5/6. Functionally, converts 2C-methyl-D-erythritol 2,4-cyclodiphosphate (ME-2,4cPP) into 1-hydroxy-2-methyl-2-(E)-butenyl 4-diphosphate. This chain is 4-hydroxy-3-methylbut-2-en-1-yl diphosphate synthase (flavodoxin), found in Haemophilus influenzae (strain PittGG).